Reading from the N-terminus, the 425-residue chain is Dihydroorotase (425 aa).

Zn(2+) is bound by residues His56 and His58. Residues 58–60 and Asn90 contribute to the substrate site; that span reads HYR. Zn(2+) is bound by residues Asp148, His175, and His228. A substrate-binding site is contributed by Asn274. Asp301 is a Zn(2+) binding site. The active site involves Asp301. Residues His305 and 319-320 contribute to the substrate site; that span reads FG.

Belongs to the metallo-dependent hydrolases superfamily. DHOase family. Class I DHOase subfamily. It depends on Zn(2+) as a cofactor.

The enzyme catalyses (S)-dihydroorotate + H2O = N-carbamoyl-L-aspartate + H(+). Its pathway is pyrimidine metabolism; UMP biosynthesis via de novo pathway; (S)-dihydroorotate from bicarbonate: step 3/3. Functionally, catalyzes the reversible cyclization of carbamoyl aspartate to dihydroorotate. The chain is Dihydroorotase from Lactobacillus johnsonii (strain CNCM I-12250 / La1 / NCC 533).